The following is a 122-amino-acid chain: Co-chaperonin GroES (122 aa).

Belongs to the GroES chaperonin family. Heptamer of 7 subunits arranged in a ring. Interacts with the chaperonin GroEL.

It localises to the cytoplasm. Its function is as follows. Together with the chaperonin GroEL, plays an essential role in assisting protein folding. The GroEL-GroES system forms a nano-cage that allows encapsulation of the non-native substrate proteins and provides a physical environment optimized to promote and accelerate protein folding. GroES binds to the apical surface of the GroEL ring, thereby capping the opening of the GroEL channel. This chain is Co-chaperonin GroES, found in Aquifex aeolicus (strain VF5).